The chain runs to 299 residues: Transcription factor srbB (299 aa).

Disordered regions lie at residues 1–33 (MAYNNRPDASTAFTFDNDDRFVNQQPKGPDPLS) and 81–204 (ISGF…NAAK). Residues 161 to 170 (PVTSQATTSP) show a composition bias toward low complexity. Positions 188–199 (RSLSTDSQTATG) are enriched in polar residues. The tract at residues 203–216 (AKRAAHNIIEKRYR) is basic motif. In terms of domain architecture, bHLH spans 203–264 (AKRAAHNIIE…TNAIAYMQEL (62 aa)). The interval 217-264 (TNMNAKFVALEKAMSGSGVQKPTKGGSGPASLKKSEILTNAIAYMQEL) is helix-loop-helix motif. The stretch at 254-281 (LTNAIAYMQELQDQNAALQKELALLKQN) forms a coiled coil.

Its subcellular location is the nucleus. Key transcription factors critical for hypoxia adaptation and virulence. Plays a major role in regulation of heme biosynthesis and carbohydrate metabolism early in the response to hypoxia. The chain is Transcription factor srbB from Aspergillus fumigatus (strain ATCC MYA-4609 / CBS 101355 / FGSC A1100 / Af293) (Neosartorya fumigata).